Consider the following 367-residue polypeptide: HTH-type transcriptional regulator GbdR (367 aa).

Residues 227–325 (QEIVALMEAN…GIPPRDERQG (99 aa)) enclose the HTH araC/xylS-type domain. DNA-binding regions (H-T-H motif) lie at residues 244-265 (DELAVYVNVSRRQLERLFQKYL) and 292-315 (IIEVASVCGFVSTPHFSKCYREYF).

Its function is as follows. Specific regulator of choline metabolism, which activates transcription of at least 25 genes from 11 promoters in response to choline metabolites. Required for the induction of plcH, encoding the phospholipase C, and pchP, encoding the phosphorylcholine phosphatase, in response to glycine betaine (GB) and dimethylglycine (DMG). Also controls the expression of gbcAB and dgcAB, which are required for GB and DMG degradation, respectively, in response to both GB and DMG. The GbdR regulon also includes genes encoding sarcosine, glycine and serine catabolic enzymes, the BetX and CbcXWV quaternary amine transport proteins and the acetylcholine esterase gene, choE. Acts by binding directly to the promoter region of the genes. May play an important role during P.aeruginosa interactions with eukaryotes. This chain is HTH-type transcriptional regulator GbdR, found in Pseudomonas aeruginosa (strain UCBPP-PA14).